A 473-amino-acid chain; its full sequence is Glutamate--tRNA ligase 1 (473 aa).

The 'HIGH' region motif lies at 23 to 33; sequence PSPTGLLHVGG. The 'KMSKS' region signature appears at 252 to 256; it reads KLSKR. ATP is bound at residue K255.

This sequence belongs to the class-I aminoacyl-tRNA synthetase family. Glutamate--tRNA ligase type 1 subfamily. As to quaternary structure, monomer.

Its subcellular location is the cytoplasm. It carries out the reaction tRNA(Glu) + L-glutamate + ATP = L-glutamyl-tRNA(Glu) + AMP + diphosphate. Its function is as follows. Catalyzes the attachment of glutamate to tRNA(Glu) in a two-step reaction: glutamate is first activated by ATP to form Glu-AMP and then transferred to the acceptor end of tRNA(Glu). This is Glutamate--tRNA ligase 1 from Granulibacter bethesdensis (strain ATCC BAA-1260 / CGDNIH1).